Here is a 343-residue protein sequence, read N- to C-terminus: Multidrug resistance protein MdtN (343 aa).

Residues 1-12 are Cytoplasmic-facing; the sequence is MESTPKKAPRSK. Residues 13–33 form a helical; Signal-anchor for type II membrane protein membrane-spanning segment; sequence FPALLVVALALVALVFVIWRV. Residues 34 to 343 are Periplasmic-facing; the sequence is DSAPSTNDAY…ASAVANLEPQ (310 aa).

It belongs to the membrane fusion protein (MFP) (TC 8.A.1) family. In terms of assembly, could be part of a tripartite efflux system composed of MdtN, MdtO and MdtP.

Its subcellular location is the cell inner membrane. Could be involved in resistance to puromycin, acriflavine and tetraphenylarsonium chloride. The polypeptide is Multidrug resistance protein MdtN (mdtN) (Shigella flexneri).